Consider the following 170-residue polypeptide: Acetyl-CoA decarbonylase/synthase complex subunit epsilon 2 (170 aa).

It belongs to the CdhB family. In terms of assembly, heterotetramer of two alpha and two epsilon subunits. The ACDS complex is made up of alpha, epsilon, beta, gamma and delta subunits with a probable stoichiometry of (alpha(2)epsilon(2))(4)-beta(8)-(gamma(1)delta(1))(8).

The protein operates within one-carbon metabolism; methanogenesis from acetate. Its function is as follows. Part of a complex that catalyzes the reversible cleavage of acetyl-CoA, allowing growth on acetate as sole source of carbon and energy. The alpha-epsilon subcomponent functions as a carbon monoxide dehydrogenase. The precise role of the epsilon subunit is unclear; it may have a stabilizing role within the alpha(2)epsilon(2) component and/or be involved in electron transfer to FAD during a potential FAD-mediated CO oxidation. The sequence is that of Acetyl-CoA decarbonylase/synthase complex subunit epsilon 2 (cdhB2) from Methanosarcina mazei (strain ATCC BAA-159 / DSM 3647 / Goe1 / Go1 / JCM 11833 / OCM 88) (Methanosarcina frisia).